The chain runs to 150 residues: Large ribosomal subunit protein uL11 (150 aa).

Residues 83–111 (AAGLKPQGKRNRAKGSEKPGRQTAGTVTA) form a disordered region.

It belongs to the universal ribosomal protein uL11 family. Part of the ribosomal stalk of the 50S ribosomal subunit. Interacts with L10 and the large rRNA to form the base of the stalk. L10 forms an elongated spine to which L12 dimers bind in a sequential fashion forming a multimeric L10(L12)X complex. Post-translationally, one or more lysine residues are methylated.

Forms part of the ribosomal stalk which helps the ribosome interact with GTP-bound translation factors. The protein is Large ribosomal subunit protein uL11 of Paracoccus denitrificans (strain Pd 1222).